The following is a 236-amino-acid chain: Purine nucleoside phosphorylase DeoD-type (236 aa).

Histidine 4 is an a purine D-ribonucleoside binding site. Phosphate contacts are provided by residues glycine 20, arginine 24, arginine 43, and 87–90; that span reads RVGT. A purine D-ribonucleoside contacts are provided by residues 179–181 and 203–204; these read EME and SD. Aspartate 204 (proton donor) is an active-site residue.

The protein belongs to the PNP/UDP phosphorylase family. As to quaternary structure, homohexamer; trimer of homodimers.

It catalyses the reaction a purine D-ribonucleoside + phosphate = a purine nucleobase + alpha-D-ribose 1-phosphate. The catalysed reaction is a purine 2'-deoxy-D-ribonucleoside + phosphate = a purine nucleobase + 2-deoxy-alpha-D-ribose 1-phosphate. Catalyzes the reversible phosphorolytic breakdown of the N-glycosidic bond in the beta-(deoxy)ribonucleoside molecules, with the formation of the corresponding free purine bases and pentose-1-phosphate. The protein is Purine nucleoside phosphorylase DeoD-type of Streptococcus pneumoniae serotype 2 (strain D39 / NCTC 7466).